Reading from the N-terminus, the 131-residue chain is uncharacterized protein (131 aa).

This is an uncharacterized protein from Staphylococcus aureus.